The primary structure comprises 292 residues: NAD kinase (292 aa).

The Proton acceptor role is filled by aspartate 73. NAD(+) is bound by residues 73 to 74, 147 to 148, histidine 158, arginine 175, aspartate 177, 188 to 193, and glutamine 247; these read DG, NE, and TAYSLS.

Belongs to the NAD kinase family. A divalent metal cation serves as cofactor.

Its subcellular location is the cytoplasm. The catalysed reaction is NAD(+) + ATP = ADP + NADP(+) + H(+). Its function is as follows. Involved in the regulation of the intracellular balance of NAD and NADP, and is a key enzyme in the biosynthesis of NADP. Catalyzes specifically the phosphorylation on 2'-hydroxyl of the adenosine moiety of NAD to yield NADP. This chain is NAD kinase, found in Shigella boydii serotype 4 (strain Sb227).